Consider the following 257-residue polypeptide: Transcription factor MYB4 (257 aa).

HTH myb-type domains are found at residues 9–61 and 62–116; these read KMGL…INYL and RPDI…KKRL. DNA-binding regions (H-T-H motif) lie at residues 37–61 and 89–112; these read WRALPKQAGLLRCGKSCRLRWINYL and WSAIAARLPGRTDNEIKNVWHTHL. The interval 115–179 is disordered; sequence RLDAPAQGGH…VAEEHGNAGI (65 aa). A compositionally biased stretch (basic residues) spans 130–140; it reads GKKHKKPKSAK. Low complexity predominate over residues 141–170; it reads KPAAAAAAPPASPERSASSSVTESSMASSV.

It is found in the nucleus. In terms of biological role, transcriptional activator involved in cold stress response. Regulates positively the expression of genes involved in reactive oxygen species (ROS) scavenging such as peroxidase and superoxide dismutase during cold stress. Transactivates a complex gene network that have major effects on stress tolerance and panicle development. This chain is Transcription factor MYB4, found in Oryza sativa subsp. japonica (Rice).